The following is an 846-amino-acid chain: Aminopeptidase N (846 aa).

Substrate is bound by residues E120 and 252-256 (GAMEN). A Zn(2+)-binding site is contributed by H288. Residue E289 is the Proton acceptor of the active site. Residues H292 and E311 each coordinate Zn(2+).

Belongs to the peptidase M1 family. Monomer. Requires Zn(2+) as cofactor.

It localises to the cytoplasm. The catalysed reaction is Release of an N-terminal amino acid, Xaa-|-Yaa- from a peptide, amide or arylamide. Xaa is preferably Ala, but may be most amino acids including Pro (slow action). When a terminal hydrophobic residue is followed by a prolyl residue, the two may be released as an intact Xaa-Pro dipeptide.. Its function is as follows. Aminopeptidase with broad substrate specificity to several peptides. It has more affinity for oligopeptides than for dipeptides. It plays an essential role in the metabolism, it may be involved in nitrogen supply or protein turnover. In Lactococcus lactis subsp. cremoris (Streptococcus cremoris), this protein is Aminopeptidase N (pepN).